Here is a 142-residue protein sequence, read N- to C-terminus: Large ribosomal subunit protein uL13 (142 aa).

The protein belongs to the universal ribosomal protein uL13 family. Part of the 50S ribosomal subunit.

This protein is one of the early assembly proteins of the 50S ribosomal subunit, although it is not seen to bind rRNA by itself. It is important during the early stages of 50S assembly. The sequence is that of Large ribosomal subunit protein uL13 from Tolumonas auensis (strain DSM 9187 / NBRC 110442 / TA 4).